Consider the following 682-residue polypeptide: Pneumocandin biosynthesis cluster protein B (682 aa).

Residues 63 to 73 show a composition bias toward low complexity; it reads SSLSSTEVTSS. Disordered stretches follow at residues 63–86, 107–129, and 251–358; these read SSLS…DAPE, QNTP…DTNQ, and SEST…SPAN. Polar residues-rich tracts occupy residues 257–279 and 310–320; these read NTGS…SHSS and PRQTTEATPCD. A compositionally biased stretch (basic and acidic residues) spans 335–349; it reads PERRSMKMVRKEARD.

Functionally, part of the gene cluster that mediates the biosynthesis of pneumocandins, lipohexapeptides of the echinocandin family that prevent fungal cell wall formation by non-competitive inhibition of beta-1,3-glucan synthase. The 10,12-dimethylmyristoyl side chain is synthesized by the reducing polyketide synthase gloL/GLPKS4. The thioesterase gloN/GLHYD exclusively interacts with gloL/GLPKS4 to maintain turnover of the polyketide side chain. The 10R,12S-dimethylmyristic acid is then transferred to the first thiolation domain of the nonribosomal peptide synthetase gloA/GLNRPS4 by the acyl-AMP ligase gloD/GLligase, followed by its acylation to L-ornithine to trigger elongation of the cyclic hexapeptide. L-ornithine, 4R-hydroxyl-L-proline (generated from L-proline by the dioxygenase gloF/GLOXY2), 3S-hydroxyl-L-homotyrosine (generated by gloG/GLHtyB, gloH/GLHtyA, gloI/GLHtyC, gloJ/GLHtyD and hydroxylated at C-3 by the dioxygenase gloM/GLOXY1), 3R-hydroxyl-L-glutamine (generated from L-glutamine probably by the dioxygenase gloE/GLOXY3) and 3S-hydroxyl-L-proline (generated from L-proline by the dioxygenase gloF/GLOXY2 to yield pneumocandin B0), or 3S-hydroxyl-4S-methyl-L-proline (generated from L-leucine by the dioxygenase gloC/GLOXY4 to yield pneumocandin A0) are sequentially added to the growing chain. The last C domain of gloA/GLNRPS4 is proposed to be responsible for cyclization by condensation to form the peptide bond between L-ornithine and 3S-hydroxyl-4S-methyl-L-proline (for pneumocandin A0) or 3S-hydroxyl-L-proline (for pneumocandin B0). Finally, the subsequent C-4 hydroxylation of 3S-hydroxyl-L-homotyrosine and L-ornithine dihydroxylation at C-4 and C-5 are performed by the cytochrome P450 monooxygenases gloP/GLP450-1 and gloO/GLP450-2, respectively. In Glarea lozoyensis (strain ATCC 20868 / MF5171), this protein is Pneumocandin biosynthesis cluster protein B.